A 140-amino-acid polypeptide reads, in one-letter code: Nucleoside diphosphate kinase (140 aa).

ATP-binding residues include K9, F57, R85, T91, R102, and N112. H115 serves as the catalytic Pros-phosphohistidine intermediate.

The protein belongs to the NDK family. As to quaternary structure, homotetramer. It depends on Mg(2+) as a cofactor.

It is found in the cytoplasm. The catalysed reaction is a 2'-deoxyribonucleoside 5'-diphosphate + ATP = a 2'-deoxyribonucleoside 5'-triphosphate + ADP. It carries out the reaction a ribonucleoside 5'-diphosphate + ATP = a ribonucleoside 5'-triphosphate + ADP. Major role in the synthesis of nucleoside triphosphates other than ATP. The ATP gamma phosphate is transferred to the NDP beta phosphate via a ping-pong mechanism, using a phosphorylated active-site intermediate. In Chlorobium limicola (strain DSM 245 / NBRC 103803 / 6330), this protein is Nucleoside diphosphate kinase.